Consider the following 240-residue polypeptide: Probable transcriptional regulatory protein Adeh_2184 (240 aa).

Belongs to the TACO1 family.

Its subcellular location is the cytoplasm. The polypeptide is Probable transcriptional regulatory protein Adeh_2184 (Anaeromyxobacter dehalogenans (strain 2CP-C)).